Consider the following 464-residue polypeptide: Mannose-1-phosphate guanylyltransferase (464 aa).

The protein belongs to the mannose-6-phosphate isomerase type 2 family.

It catalyses the reaction alpha-D-mannose 1-phosphate + GTP + H(+) = GDP-alpha-D-mannose + diphosphate. Its pathway is nucleotide-sugar biosynthesis; GDP-alpha-D-mannose biosynthesis; GDP-alpha-D-mannose from alpha-D-mannose 1-phosphate (GTP route): step 1/1. It participates in bacterial outer membrane biogenesis; LPS O-antigen biosynthesis. Involved in GDP-mannose biosynthesis which serves as the activated sugar nucleotide precursor for mannose residues in cell surface polysaccharides. This enzyme participates in synthesis of the LPS O7 antigen. This chain is Mannose-1-phosphate guanylyltransferase (manC), found in Escherichia coli.